Consider the following 368-residue polypeptide: MLFKKFTWVIPSLFLTIISTSLLISCATKSDNTLIFNISLDHNADTSIEKFFTVFSKKLSGKLNKKINVNFNIVDDSFTKINNIQANKADFAFVNSQAIASNNWFGYTPLIQTLTTAFKEDLELDYYEDGNLQKKAEKTNLLFLSPPYKEWDDIKQKWTGNRYDFLYEPSKLVSFYRSMILITGSASEITAIKKAWNEKNWNQFMKFGIGHGQTNSASRFELPDLLFRKHFAKNYPGLQNAINSDPDKFAVVRGREIGINKNIKIVFDDANSFSWTQNIKGSKRPFYTPIDPNDRLEILTYSDPLLYDIGIVSNNLSRIYQKAIGEIFIELAQSSEDLYGPSIGYNGYKMINDFEKEVVEIIEKTYGK.

The signal sequence occupies residues 1–25 (MLFKKFTWVIPSLFLTIISTSLLIS). Residue Cys-26 is the site of N-palmitoyl cysteine attachment. Cys-26 is lipidated: S-diacylglycerol cysteine.

The protein resides in the cell membrane. In terms of biological role, P37 is part of a high-affinity transport system. The polypeptide is High affinity transport system protein p37 (p37) (Mycoplasma genitalium (strain ATCC 33530 / DSM 19775 / NCTC 10195 / G37) (Mycoplasmoides genitalium)).